A 1214-amino-acid chain; its full sequence is MVVPEKEQSWIPKIFKKKTCTTFIVDSTDPGGTLCQCGRPRTAHPAVAMEDAFGAAVVTVWDSDAHTTEKPTDAYGELDFTGAGRKHSNFLRLSDRTDPAAVYSLVTRTWGFRAPNLVVSVLGGSGGPVLQTWLQDLLRRGLVRAAQSTGAWIVTGGLHTGIGRHVGVAVRDHQMASTGGTKVVAMGVAPWGVVRNRDTLINPKGSFPARYRWRGDPEDGVQFPLDYNYSAFFLVDDGTHGCLGGENRFRLRLESYISQQKTGVGGTGIDIPVLLLLIDGDEKMLTRIENATQAQLPCLLVAGSGGAADCLAETLEDTLAPGSGGARQGEARDRIRRFFPKGDLEVLQAQVERIMTRKELLTVYSSEDGSEEFETIVLKALVKACGSSEASAYLDELRLAVAWNRVDIAQSELFRGDIQWRSFHLEASLMDALLNDRPEFVRLLISHGLSLGHFLTPMRLAQLYSAAPSNSLIRNLLDQASHSAGTKAPALKGGAAELRPPDVGHVLRMLLGKMCAPRYPSGGAWDPHPGQGFGESMYLLSDKATSPLSLDAGLGQAPWSDLLLWALLLNRAQMAMYFWEMGSNAVSSALGACLLLRVMARLEPDAEEAARRKDLAFKFEGMGVDLFGECYRSSEVRAARLLLRRCPLWGDATCLQLAMQADARAFFAQDGVQSLLTQKWWGDMASTTPIWALVLAFFCPPLIYTRLITFRKSEEEPTREELEFDMDSVINGEGPVGTADPAEKTPLGVPRQSGRPGCCGGRCGGRRCLRRWFHFWGAPVTIFMGNVVSYLLFLLLFSRVLLVDFQPAPPGSLELLLYFWAFTLLCEELRQGLSGGGGSLASGGPGPGHASLSQRLRLYLADSWNQCDLVALTCFLLGVGCRLTPGLYHLGRTVLCIDFMVFTVRLLHIFTVNKQLGPKIVIVSKMMKDVFFFLFFLGVWLVAYGVATEGLLRPRDSDFPSILRRVFYRPYLQIFGQIPQEDMDVALMEHSNCSSEPGFWAHPPGAQAGTCVSQYANWLVVLLLVIFLLVANILLVNLLIAMFSYTFGKVQGNSDLYWKAQRYRLIREFHSRPALAPPFIVISHLRLLLRQLCRRPRSPQPSSPALEHFRVYLSKEAERKLLTWESVHKENFLLARARDKRESDSERLKRTSQKVDLALKQLGHIREYEQRLKVLEREVQQCSRVLGWVAEALSRSALLPPGGPPPPDLPGSKD.

The Cytoplasmic portion of the chain corresponds to 1-782 (MVVPEKEQSW…FHFWGAPVTI (782 aa)). 3 residues coordinate ATP: arginine 171, arginine 214, and leucine 225. Ca(2+)-binding residues include aspartate 270, alanine 392, aspartate 395, and glutamate 396. Arginine 421 and glycine 448 together coordinate ATP. The chain crosses the membrane as a helical span at residues 783–803 (FMGNVVSYLLFLLLFSRVLLV). The Extracellular portion of the chain corresponds to 804 to 814 (DFQPAPPGSLE). Residues 815 to 835 (LLLYFWAFTLLCEELRQGLSG) form a helical membrane-spanning segment. Residues glutamate 828 and glutamine 831 each contribute to the Ca(2+) site. Residues 836-863 (GGGSLASGGPGPGHASLSQRLRLYLADS) are Cytoplasmic-facing. Residues 864 to 884 (WNQCDLVALTCFLLGVGCRLT) traverse the membrane as a helical segment. Ca(2+) is bound by residues asparagine 865 and aspartate 868. Over 885 to 886 (PG) the chain is Extracellular. A helical transmembrane segment spans residues 887–910 (LYHLGRTVLCIDFMVFTVRLLHIF). Over 911–930 (TVNKQLGPKIVIVSKMMKDV) the chain is Cytoplasmic. Residues 931–951 (FFFLFFLGVWLVAYGVATEGL) form a helical membrane-spanning segment. Topologically, residues 952-963 (LRPRDSDFPSIL) are extracellular. Residues 964-984 (RRVFYRPYLQIFGQIPQEDMD) constitute an intramembrane region (pore-forming). Residues 975-977 (FGQ) carry the Selectivity filter motif. Residues 985 to 1019 (VALMEHSNCSSEPGFWAHPPGAQAGTCVSQYANWL) lie on the Extracellular side of the membrane. Asparagine 992 carries N-linked (GlcNAc...) asparagine glycosylation. Cysteine 993 and cysteine 1011 are joined by a disulfide. A helical membrane pass occupies residues 1020–1040 (VVLLLVIFLLVANILLVNLLI). Residues 1041–1214 (AMFSYTFGKV…PPPDLPGSKD (174 aa)) are Cytoplasmic-facing. The interval 1076 to 1176 (APPFIVISHL…EYEQRLKVLE (101 aa)) is calmodulin-binding. A coiled-coil region spans residues 1134–1187 (LARARDKRESDSERLKRTSQKVDLALKQLGHIREYEQRLKVLEREVQQCSRVLG). Residues 1136-1141 (RARDKR) form a mediates modulation by decavanadate and PIP2-binding region. Residues serine 1145 and serine 1152 each carry the phosphoserine; by PKC modification.

Belongs to the transient receptor (TC 1.A.4) family. LTrpC subfamily. TRPM4 sub-subfamily. As to quaternary structure, homotetramer. Phosphorylation by PKC leads to increase the sensitivity to Ca(2+). In terms of processing, sumoylated. Desumoylated by SENP1. As to expression, widely expressed with a high expression in intestine and prostate. In brain, it is both expressed in whole cerebral arteries and isolated vascular smooth muscle cells. Prominently expressed in Purkinje fibers. Expressed at higher levels in T-helper 2 (Th2) cells as compared to T-helper 1 (Th1) cells. Expressed in keratocytes.

It localises to the cell membrane. The protein localises to the endoplasmic reticulum. The protein resides in the golgi apparatus. It catalyses the reaction Na(+)(in) = Na(+)(out). It carries out the reaction K(+)(in) = K(+)(out). With respect to regulation, displays weak voltage dependence, and repressed by decavanadate. Calmodulin-binding confers the Ca(2+) sensitivity. ATP is able to restore Ca(2+) sensitivity after desensitization. ATP inhibits channel activity. Phosphatidylinositol 4,5-bisphosphate (PIP2)-binding strongly enhances activity, by increasing the channel's Ca(2+) sensitivity and shifting its voltage dependence of activation towards negative potentials. Activity is also enhanced by 3,5-bis(trifluoromethyl)pyrazole derivative (BTP2). Exhibits pronounced temperature sensitivity, with activities strongly intensifying near physiological temperatures. Functionally, calcium-activated selective cation channel that mediates membrane depolarization. While it is activated by increase in intracellular Ca(2+), it is impermeable to it. Mediates transport of monovalent cations (Na(+) &gt; K(+) &gt; Cs(+) &gt; Li(+)), leading to depolarize the membrane. It thereby plays a central role in cadiomyocytes, neurons from entorhinal cortex, dorsal root and vomeronasal neurons, endocrine pancreas cells, kidney epithelial cells, cochlea hair cells etc. Participates in T-cell activation by modulating Ca(2+) oscillations after T lymphocyte activation, which is required for NFAT-dependent IL2 production. Involved in myogenic constriction of cerebral arteries. Controls insulin secretion in pancreatic beta-cells. May also be involved in pacemaking or could cause irregular electrical activity under conditions of Ca(2+) overload. Affects T-helper 1 (Th1) and T-helper 2 (Th2) cell motility and cytokine production through differential regulation of calcium signaling and NFATC1 localization. Enhances cell proliferation through up-regulation of the beta-catenin signaling pathway. Plays a role in keratinocyte differentiation. Lacks channel activity. In Homo sapiens (Human), this protein is Transient receptor potential cation channel subfamily M member 4.